Reading from the N-terminus, the 492-residue chain is NADH-quinone oxidoreductase subunit N (492 aa).

Helical transmembrane passes span 13 to 33 (MLPVLLVLVGAIVSTLGGFWL), 43 to 63 (ILFVLASGASLVWLWGGAPWA), 82 to 102 (AALLLGGTVLLGALLTLLVSL), 110 to 132 (VSFAEFDALLMYAVTGCLLIAFS), 136 to 155 (IVMLIGLEIMSLASYVLATL), 169 to 189 (FLLGSVGSAILIYGLAFLYGA), 210 to 230 (IGILVTGTLLVLSGFGVKIAL), 245 to 265 (PTLVSLFLSTVVKVAAFAGML), 272 to 292 (LAAGPGWHSVLQILVALTLVI), 306 to 326 (LLAYSAVAHTGFLAMTLLGDT), 331 to 351 (AALGYYLLVYTLMTVGALAVV), 377 to 397 (AVALAFCLASLAGLPPFAGFF), 410 to 430 (GYLLISVLAVLSSVAALVYYL), and 457 to 477 (VAVALSLIGIVVLGLLPNLWY).

It belongs to the complex I subunit 2 family. NDH-1 is composed of 15 different subunits. Subunits NuoA, H, J, K, L, M, N constitute the membrane sector of the complex.

It localises to the cell membrane. The catalysed reaction is a quinone + NADH + 5 H(+)(in) = a quinol + NAD(+) + 4 H(+)(out). Its function is as follows. NDH-1 shuttles electrons from NADH, via FMN and iron-sulfur (Fe-S) centers, to quinones in the respiratory chain. The immediate electron acceptor for the enzyme in this species is believed to be a menaquinone. Couples the redox reaction to proton translocation (for every two electrons transferred, four hydrogen ions are translocated across the cytoplasmic membrane), and thus conserves the redox energy in a proton gradient. The chain is NADH-quinone oxidoreductase subunit N from Deinococcus radiodurans (strain ATCC 13939 / DSM 20539 / JCM 16871 / CCUG 27074 / LMG 4051 / NBRC 15346 / NCIMB 9279 / VKM B-1422 / R1).